Reading from the N-terminus, the 458-residue chain is Elongation factor 1-alpha (458 aa).

Residue Gly2 is modified to N,N,N-trimethylglycine. N6,N6-dimethyllysine; alternate is present on Lys3. An N6-methyllysine; alternate modification is found at Lys3. In terms of domain architecture, tr-type G spans 5-240; the sequence is KTHVNVVVIG…DAIEPPVRPS (236 aa). A G1 region spans residues 14–21; the sequence is GHVDSGKS. 14–21 is a binding site for GTP; sequence GHVDSGKS. Lys30 carries the post-translational modification N6-methyllysine. The interval 70–74 is G2; that stretch reads GITID. Lys79 carries the post-translational modification N6,N6,N6-trimethyllysine. Residues 91–94 are G3; the sequence is DAPG. Residues 91–95 and 153–156 contribute to the GTP site; these read DAPGH and NKMD. The tract at residues 153 to 156 is G4; it reads NKMD. Residues 192–194 are G5; sequence SGW. An N6,N6-dimethyllysine; alternate modification is found at Lys316. Lys316 carries the post-translational modification N6-methyllysine; alternate. N6-methyllysine is present on Lys390.

This sequence belongs to the TRAFAC class translation factor GTPase superfamily. Classic translation factor GTPase family. EF-Tu/EF-1A subfamily.

It localises to the cytoplasm. Functionally, this protein promotes the GTP-dependent binding of aminoacyl-tRNA to the A-site of ribosomes during protein biosynthesis. The protein is Elongation factor 1-alpha (TEF-1) of Mucor circinelloides f. lusitanicus (Mucor racemosus var. lusitanicus).